A 359-amino-acid polypeptide reads, in one-letter code: Glycerol-1-phosphate dehydrogenase [NAD(P)+] (359 aa).

NAD(+) contacts are provided by residues 107-111 (GRVID) and 129-132 (TAAS). Aspartate 134 is a binding site for substrate. Serine 138 contributes to the NAD(+) binding site. Aspartate 181 lines the substrate pocket. Positions 181 and 261 each coordinate Zn(2+). Histidine 265 contacts substrate. Zn(2+) is bound at residue histidine 277.

It belongs to the glycerol-1-phosphate dehydrogenase family. Zn(2+) serves as cofactor.

The protein localises to the cytoplasm. It carries out the reaction sn-glycerol 1-phosphate + NAD(+) = dihydroxyacetone phosphate + NADH + H(+). The catalysed reaction is sn-glycerol 1-phosphate + NADP(+) = dihydroxyacetone phosphate + NADPH + H(+). It functions in the pathway membrane lipid metabolism; glycerophospholipid metabolism. In terms of biological role, catalyzes the NAD(P)H-dependent reduction of dihydroxyacetonephosphate (DHAP or glycerone phosphate) to glycerol 1-phosphate (G1P). The G1P thus generated is used as the glycerophosphate backbone of phospholipids in the cellular membranes of Archaea. This is Glycerol-1-phosphate dehydrogenase [NAD(P)+] from Methanospirillum hungatei JF-1 (strain ATCC 27890 / DSM 864 / NBRC 100397 / JF-1).